We begin with the raw amino-acid sequence, 79 residues long: Small ribosomal subunit protein bS18 (79 aa).

It belongs to the bacterial ribosomal protein bS18 family. As to quaternary structure, part of the 30S ribosomal subunit. Forms a tight heterodimer with protein bS6.

Functionally, binds as a heterodimer with protein bS6 to the central domain of the 16S rRNA, where it helps stabilize the platform of the 30S subunit. This chain is Small ribosomal subunit protein bS18, found in Rhodopseudomonas palustris (strain BisB18).